The chain runs to 240 residues: NDR1/HIN1-like protein 2 (240 aa).

Residues 57-77 traverse the membrane as a helical segment; sequence NILIAVAVILGVAALILWLIF. N-linked (GlcNAc...) asparagine glycosylation is found at Asn-109, Asn-141, Asn-151, and Asn-223.

As to expression, expressed at low levels in roots, rosette leaves, cauline leaves, stems, flowers and siliques.

The protein resides in the cell membrane. Its function is as follows. May play a role in plant immunity. This is NDR1/HIN1-like protein 2 from Arabidopsis thaliana (Mouse-ear cress).